We begin with the raw amino-acid sequence, 126 residues long: Fluoride-specific ion channel FluC (126 aa).

The next 4 membrane-spanning stretches (helical) occupy residues valine 6–alanine 26, threonine 32–isoleucine 52, leucine 68–glycine 90, and leucine 102–alanine 122. Na(+) contacts are provided by glycine 76 and threonine 79.

This sequence belongs to the fluoride channel Fluc/FEX (TC 1.A.43) family.

It localises to the cell inner membrane. It catalyses the reaction fluoride(in) = fluoride(out). Na(+) is not transported, but it plays an essential structural role and its presence is essential for fluoride channel function. In terms of biological role, fluoride-specific ion channel. Important for reducing fluoride concentration in the cell, thus reducing its toxicity. The polypeptide is Fluoride-specific ion channel FluC (Chlorobaculum tepidum (strain ATCC 49652 / DSM 12025 / NBRC 103806 / TLS) (Chlorobium tepidum)).